Consider the following 164-residue polypeptide: Large ribosomal subunit protein uL10 (164 aa).

This sequence belongs to the universal ribosomal protein uL10 family. In terms of assembly, part of the ribosomal stalk of the 50S ribosomal subunit. The N-terminus interacts with L11 and the large rRNA to form the base of the stalk. The C-terminus forms an elongated spine to which L12 dimers bind in a sequential fashion forming a multimeric L10(L12)X complex.

In terms of biological role, forms part of the ribosomal stalk, playing a central role in the interaction of the ribosome with GTP-bound translation factors. This chain is Large ribosomal subunit protein uL10 (rplJ), found in Helicobacter pylori (strain J99 / ATCC 700824) (Campylobacter pylori J99).